The primary structure comprises 331 residues: Anthranilate phosphoribosyltransferase (331 aa).

Residues glycine 79, 82 to 83 (GD), threonine 87, 89 to 92 (NIST), 107 to 115 (KHGNYGATS), and alanine 119 contribute to the 5-phospho-alpha-D-ribose 1-diphosphate site. Glycine 79 is a binding site for anthranilate. Mg(2+) is bound at residue serine 91. Asparagine 110 provides a ligand contact to anthranilate. Residue arginine 165 participates in anthranilate binding. Aspartate 223 and glutamate 224 together coordinate Mg(2+).

The protein belongs to the anthranilate phosphoribosyltransferase family. As to quaternary structure, homodimer. It depends on Mg(2+) as a cofactor.

It catalyses the reaction N-(5-phospho-beta-D-ribosyl)anthranilate + diphosphate = 5-phospho-alpha-D-ribose 1-diphosphate + anthranilate. Its pathway is amino-acid biosynthesis; L-tryptophan biosynthesis; L-tryptophan from chorismate: step 2/5. Catalyzes the transfer of the phosphoribosyl group of 5-phosphorylribose-1-pyrophosphate (PRPP) to anthranilate to yield N-(5'-phosphoribosyl)-anthranilate (PRA). In Bacteroides fragilis (strain ATCC 25285 / DSM 2151 / CCUG 4856 / JCM 11019 / LMG 10263 / NCTC 9343 / Onslow / VPI 2553 / EN-2), this protein is Anthranilate phosphoribosyltransferase.